A 667-amino-acid chain; its full sequence is tRNA uridine 5-carboxymethylaminomethyl modification enzyme MnmG (667 aa).

An FAD-binding site is contributed by 13–18 (GGGHAG). 280-294 (GPRYCPSVEDKINRF) contributes to the NAD(+) binding site.

Belongs to the MnmG family. As to quaternary structure, homodimer. Heterotetramer of two MnmE and two MnmG subunits. It depends on FAD as a cofactor.

Its subcellular location is the cytoplasm. Functionally, NAD-binding protein involved in the addition of a carboxymethylaminomethyl (cmnm) group at the wobble position (U34) of certain tRNAs, forming tRNA-cmnm(5)s(2)U34. The polypeptide is tRNA uridine 5-carboxymethylaminomethyl modification enzyme MnmG (Polaromonas naphthalenivorans (strain CJ2)).